The sequence spans 163 residues: Crossover junction endodeoxyribonuclease RuvC (163 aa).

Active-site residues include Asp4, Glu65, and Asp138. Mg(2+) contacts are provided by Asp4, Glu65, and Asp138.

Belongs to the RuvC family. In terms of assembly, homodimer which binds Holliday junction (HJ) DNA. The HJ becomes 2-fold symmetrical on binding to RuvC with unstacked arms; it has a different conformation from HJ DNA in complex with RuvA. In the full resolvosome a probable DNA-RuvA(4)-RuvB(12)-RuvC(2) complex forms which resolves the HJ. Requires Mg(2+) as cofactor.

The protein localises to the cytoplasm. It catalyses the reaction Endonucleolytic cleavage at a junction such as a reciprocal single-stranded crossover between two homologous DNA duplexes (Holliday junction).. Its function is as follows. The RuvA-RuvB-RuvC complex processes Holliday junction (HJ) DNA during genetic recombination and DNA repair. Endonuclease that resolves HJ intermediates. Cleaves cruciform DNA by making single-stranded nicks across the HJ at symmetrical positions within the homologous arms, yielding a 5'-phosphate and a 3'-hydroxyl group; requires a central core of homology in the junction. The consensus cleavage sequence is 5'-(A/T)TT(C/G)-3'. Cleavage occurs on the 3'-side of the TT dinucleotide at the point of strand exchange. HJ branch migration catalyzed by RuvA-RuvB allows RuvC to scan DNA until it finds its consensus sequence, where it cleaves and resolves the cruciform DNA. The chain is Crossover junction endodeoxyribonuclease RuvC from Corynebacterium diphtheriae (strain ATCC 700971 / NCTC 13129 / Biotype gravis).